The sequence spans 348 residues: Holliday junction branch migration complex subunit RuvB (348 aa).

The segment at 1 to 20 (MKPPARMVSPERRSDDVGDT) is disordered. The tract at residues 1–183 (MKPPARMVSP…FGIPIRLNFY (183 aa)) is large ATPase domain (RuvB-L). Residues Leu-22, Arg-23, Gly-64, Lys-67, Thr-68, Thr-69, 130–132 (EDF), Arg-173, Tyr-183, and Arg-220 contribute to the ATP site. A Mg(2+)-binding site is contributed by Thr-68. The segment at 184 to 254 (TVEELEGIVT…IADHALSALE (71 aa)) is small ATPAse domain (RuvB-S). The segment at 257–348 (AAGLDAMDRR…FGLFGSEDDA (92 aa)) is head domain (RuvB-H). Residues Arg-293, Arg-312, and Arg-317 each coordinate DNA.

Belongs to the RuvB family. In terms of assembly, homohexamer. Forms an RuvA(8)-RuvB(12)-Holliday junction (HJ) complex. HJ DNA is sandwiched between 2 RuvA tetramers; dsDNA enters through RuvA and exits via RuvB. An RuvB hexamer assembles on each DNA strand where it exits the tetramer. Each RuvB hexamer is contacted by two RuvA subunits (via domain III) on 2 adjacent RuvB subunits; this complex drives branch migration. In the full resolvosome a probable DNA-RuvA(4)-RuvB(12)-RuvC(2) complex forms which resolves the HJ.

The protein resides in the cytoplasm. It carries out the reaction ATP + H2O = ADP + phosphate + H(+). The RuvA-RuvB-RuvC complex processes Holliday junction (HJ) DNA during genetic recombination and DNA repair, while the RuvA-RuvB complex plays an important role in the rescue of blocked DNA replication forks via replication fork reversal (RFR). RuvA specifically binds to HJ cruciform DNA, conferring on it an open structure. The RuvB hexamer acts as an ATP-dependent pump, pulling dsDNA into and through the RuvAB complex. RuvB forms 2 homohexamers on either side of HJ DNA bound by 1 or 2 RuvA tetramers; 4 subunits per hexamer contact DNA at a time. Coordinated motions by a converter formed by DNA-disengaged RuvB subunits stimulates ATP hydrolysis and nucleotide exchange. Immobilization of the converter enables RuvB to convert the ATP-contained energy into a lever motion, pulling 2 nucleotides of DNA out of the RuvA tetramer per ATP hydrolyzed, thus driving DNA branch migration. The RuvB motors rotate together with the DNA substrate, which together with the progressing nucleotide cycle form the mechanistic basis for DNA recombination by continuous HJ branch migration. Branch migration allows RuvC to scan DNA until it finds its consensus sequence, where it cleaves and resolves cruciform DNA. This chain is Holliday junction branch migration complex subunit RuvB, found in Bradyrhizobium sp. (strain BTAi1 / ATCC BAA-1182).